The sequence spans 317 residues: Ribosomal RNA small subunit methyltransferase H (317 aa).

S-adenosyl-L-methionine is bound by residues 37-39 (AGH), aspartate 56, phenylalanine 85, aspartate 106, and glutamine 113.

This sequence belongs to the methyltransferase superfamily. RsmH family.

Its subcellular location is the cytoplasm. The enzyme catalyses cytidine(1402) in 16S rRNA + S-adenosyl-L-methionine = N(4)-methylcytidine(1402) in 16S rRNA + S-adenosyl-L-homocysteine + H(+). Functionally, specifically methylates the N4 position of cytidine in position 1402 (C1402) of 16S rRNA. This Lactococcus lactis subsp. lactis (strain IL1403) (Streptococcus lactis) protein is Ribosomal RNA small subunit methyltransferase H.